A 466-amino-acid polypeptide reads, in one-letter code: Asparagine--tRNA ligase (466 aa).

Belongs to the class-II aminoacyl-tRNA synthetase family. As to quaternary structure, homodimer.

It is found in the cytoplasm. It carries out the reaction tRNA(Asn) + L-asparagine + ATP = L-asparaginyl-tRNA(Asn) + AMP + diphosphate + H(+). The polypeptide is Asparagine--tRNA ligase (Myxococcus xanthus (strain DK1622)).